The sequence spans 864 residues: MSKSAVSPMMQQYLGIKAQHTDKLVFYRMGDFYEMFFDDAVEAAKLLDITLTTRGQMDGVPIKMAGVPFHAAEQYLARLVKLGKSVAICEQVGEVGAGKGPVERKVVRIVTPGTLTDSALLEDKETNRIVAVSPDKKYIGLAWASLQSGEFKTKLTTVDKLDDELARLQAAEILLPDSKNTPQLQTASGVTRLNAWQFAADAGEKLLTEYFGCQDLRGFGLDGKEHAVAIGAAGALLNYIRLTQNLMPQHLDGLSLETDSQYIGMDAATRRNLEITQTLSGKKSPTLMSTLDLCATHMGSRLLALWLHHPLRNRAHIRARQEAVAALESQYKPLQCRLKNIADIERIAARIAVGNARPRDLAALRDSLFALSEIDLSANGSSLLETLKAVFPETLPVAETLKAAVMPEPAVWLKDGNVINHGFHPELDELRRIQNHGDEFLLDLEAKERERTGLSTLKVEFNRVHGFYIELSKTQAEQAPADYQRRQTLKNAERFITPELKAFEDKVMTAQEQALALEKQLFDGVLKNLQTALPQLQKAAKAAAALDVLSTFSALAKERNFVRPEFADYPVIHIENGRHPVVEQQVRHFTANHTNLDHKHRLMLLTGPNMGGKSTYMRQVALIVLLAHTGCFVPADAATIGPIDQIFTRIGASDDLASNRSTFMVEMSETAYILHHATEQSLVLMDEVGRGTSTFDGLALAHAVAEHLLQKNKSFSLFATHYFELTKLPEAHATAVNMHLSALEQGQDIVFLHHIEPGPASKSYGIAVAKLAGLPVRALKSAQKHLNELEDQAAANRPQLDIFSTMPSEKGDEPNVDSFVDKAEEKHFEGILAAALEKLDPDSLTPREALSELYRLKDLCKSVS.

607–614 (GPNMGGKS) contributes to the ATP binding site.

It belongs to the DNA mismatch repair MutS family.

Functionally, this protein is involved in the repair of mismatches in DNA. It is possible that it carries out the mismatch recognition step. This protein has a weak ATPase activity. The sequence is that of DNA mismatch repair protein MutS from Neisseria meningitidis serogroup C (strain 053442).